We begin with the raw amino-acid sequence, 292 residues long: Nanos homolog 1 (292 aa).

2 disordered regions span residues 1-41 (MEAF…QPFS) and 68-121 (GGNG…SRGR). Residues 40 to 56 (FSSWNDYLGLATLITKA) form an essential for its translational repressor activity region. Residues 76-87 (PPSSSSSSCCSP) are compositionally biased toward low complexity. The segment covering 104–115 (DYDEDDDDDSDE) has biased composition (acidic residues). The segment at 213 to 267 (VCVFCRNNKEAMALYTTHILKGPDGRVLCPVLRRYTCPLCGASGDNAHTIKYCPL) adopts a Nanos-type zinc-finger fold. Residues Cys214, Cys217, His230, Cys241, Cys249, Cys252, His260, and Cys265 each coordinate Zn(2+). 2 consecutive short sequence motifs (C2HC) follow at residues 214–241 (CVFC…RVLC) and 249–265 (CPLC…IKYC). The interval 268-292 (SKVPPPPARPPPRSARDGPPGKKLR) is disordered. Residues 269-280 (KVPPPPARPPPR) show a composition bias toward pro residues. Basic and acidic residues predominate over residues 281-292 (SARDGPPGKKLR).

It belongs to the nanos family. In terms of assembly, interacts with PUM2, SNAPIN and CTNNB1. Interacts (via N-terminal region) with CTNND1. Interacts with DDX20 (via N-terminal region). Testis and ovary (at protein level). Predominantly expressed in testis. Specifically expressed during germline development. In adult tissues, it is mainly expressed in spermatogonia, the stem cells of the germline. Also expressed during meiosis in spermatocytes. Not present in late, post-meiotic stage germ cells. Expressed in fetal ovaries, while it is weakly or not expressed in mature postmeiotic oocytes, suggesting that it may be expressed in premeiotic female germ cells. Expressed at high levels only in the E-cadherin deficient cell lines. Highly expressed in lung carcinomas and mostly detected in invasive tumor cells and its expression correlates with tumor aggressiveness.

Its subcellular location is the cytoplasm. The protein resides in the perinuclear region. Its function is as follows. May act as a translational repressor which regulates translation of specific mRNAs by forming a complex with PUM2 that associates with the 3'-UTR of mRNA targets. Capable of interfering with the proadhesive and anti-invasive functions of E-cadherin. Up-regulates the production of MMP14 to promote tumor cell invasion. The polypeptide is Nanos homolog 1 (NANOS1) (Homo sapiens (Human)).